A 329-amino-acid polypeptide reads, in one-letter code: Protein PRY2 (329 aa).

A signal peptide spans 1 to 18 (MKFSKVSLLAASASVALS). Polar residues predominate over residues 122–131 (TSASATQDDV). The tract at residues 122-197 (TSASATQDDV…SSSDFSTSMV (76 aa)) is disordered. Residues 132-190 (TTTLTSSTQPTSTTTPTTTTTSPTTTTSPTTTASPTTTASPTTATTTQSTASSTQSSSS) are compositionally biased toward low complexity. Residues 197–311 (VNEHNTKRAL…EWGDYIICSY (115 aa)) form the SCP domain.

Belongs to the CRISP family. O-glycosylated.

The protein localises to the secreted. Its function is as follows. Secreted protein required for efficient export of lipids such as acetylated sterols. Acts in detoxification of hydrophobic compounds. This Saccharomyces cerevisiae (strain ATCC 204508 / S288c) (Baker's yeast) protein is Protein PRY2 (PRY2).